Reading from the N-terminus, the 321-residue chain is N-acetyllactosaminide alpha-1,3-galactosyltransferase-like 1 (321 aa).

Residues 1-6 (MQYKKE) are Cytoplasmic-facing. A helical; Signal-anchor for type II membrane protein transmembrane segment spans residues 7–24 (TLLLILLAILLALTQRYS). Residues 25–321 (RTKDHLQKMY…IKVAWQPRIT (297 aa)) lie on the Lumenal side of the membrane. N-linked (GlcNAc...) asparagine glycans are attached at residues N87 and N99. Substrate-binding positions include 95–100 (FATGNF), 187–189 (TAN), and 209–212 (HAWW). Catalysis depends on E277, which acts as the Nucleophile.

It belongs to the glycosyltransferase 6 family. Mn(2+) serves as cofactor.

It is found in the golgi apparatus. It localises to the golgi stack membrane. It carries out the reaction a beta-D-galactosyl-(1-&gt;4)-N-acetyl-beta-D-glucosaminyl derivative + UDP-alpha-D-galactose = an alpha-D-galactosyl-(1-&gt;3)-beta-D-galactosyl-(1-&gt;4)-N-acetyl-beta-D-glucosaminyl derivative + UDP + H(+). Its pathway is protein modification; protein glycosylation. Synthesizes the galactose-alpha(1,3)-galactose group by catalyzing the transfer of a galactose residue, with an alpha-1,3 linkage, on terminal lactosaminide (Gal-beta-1,4-GlcNAc-R) disaccharide borne by a glycoprotein or a glycolipid. This Rattus norvegicus (Rat) protein is N-acetyllactosaminide alpha-1,3-galactosyltransferase-like 1 (Ggta1l1).